We begin with the raw amino-acid sequence, 505 residues long: MSGIDFKQKISFQRPFSKPIEAEEEYDIVRQFESDRGRIVNSAAIRRLQQKTQVFPLERNAAVRSRLTHSMEVQQVGRHIAKEILNRFKQDGRVDALGLTKLLDPFESIVEMACLMHDIGNPPFGHFGESAINNWFSQRLDPASCGSEPASNDRCQVSALRLHEGESDLNRLRSRIRHDLSHFEGNAQAIRLVHTLLKLNLTYAQVGCILKYTRPAYWASDIPASHNYLMKKPGFYLAEEAFVDRLRRELNMGEFDRFPLTYIMEAADDISYCVADLEDAVEKNIFTVEQLYQHLTQEWGEVTPGDLFDKTVASAFRKIAHGGARRSSEDQFFMYLRVFTVARLVPHAAQRFIDNLEAVYQGNFNQALLEDSSPAYQLLKIFKNVAFKHVFNHPEVEQLELQGYRVISGLLDIYSPLLAMPLADFTLLVQEDSHRAYPIETRLFHKLSTKHRLAYIEAIEGLQHLSPEQLAIREYYFRARLLQDYISGMTDLYAYDEYRRLMAAE.

The 208-residue stretch at 66-273 (RLTHSMEVQQ…MEAADDISYC (208 aa)) folds into the HD domain.

It belongs to the dGTPase family. Type 1 subfamily. Homotetramer. It depends on Mg(2+) as a cofactor.

It catalyses the reaction dGTP + H2O = 2'-deoxyguanosine + triphosphate + H(+). DGTPase preferentially hydrolyzes dGTP over the other canonical NTPs. The sequence is that of Deoxyguanosinetriphosphate triphosphohydrolase from Serratia proteamaculans (strain 568).